The sequence spans 746 residues: Lysine-specific histone demethylase 1 homolog 2 (746 aa).

Residues 1–26 (MNSPASDETAPRRNRRKVSRKNYDEN) form a disordered region. The SWIRM domain maps to 51–152 (EKETETEALI…FGVSPLFAPY (102 aa)). The FAD site is built by Glu189, Arg191, Arg197, and Glu569.

The protein belongs to the flavin monoamine oxidase family. The cofactor is FAD. Expressed in the shoot and root apical regions of young seedlings. Expressed in inflorescences.

Probable histone demethylase that reduces the levels of histone H3 'Lys-4' methylation in chromatin of the floral repressor FLOWERING LOCUS C (FLC) and the sporophytically silenced floral repressor FWA. Seems to act in partial redundancy with FLOWERING LOCUS D (FLD) to repress FLC expression. Required for cytosine methylation of FWA. Controls primary seed dormancy by regulating DOG1 and abscisic acid signaling-related genes. The chain is Lysine-specific histone demethylase 1 homolog 2 from Arabidopsis thaliana (Mouse-ear cress).